The primary structure comprises 93 residues: MKPVLPLQFLVVFCLALQLVPGSPKQRVLKYILEPPPCISAPENCTHLCTMQEDCEKGFQCCSSFCGIVCSSETFQKRNRIKHKGSEVIMPAN.

Residues 1-22 form the signal peptide; it reads MKPVLPLQFLVVFCLALQLVPG. The WAP; atypical domain occupies 24-73; sequence PKQRVLKYILEPPPCISAPENCTHLCTMQEDCEKGFQCCSSFCGIVCSSE. Disulfide bonds link Cys45-Cys66, Cys49-Cys61, and Cys55-Cys70.

It localises to the secreted. In terms of biological role, putative acid-stable proteinase inhibitor. The chain is WAP four-disulfide core domain protein 13 (WFDC13) from Homo sapiens (Human).